Reading from the N-terminus, the 257-residue chain is DNA repair protein RecO (257 aa).

It belongs to the RecO family.

Functionally, involved in DNA repair and RecF pathway recombination. This is DNA repair protein RecO from Streptococcus thermophilus (strain ATCC BAA-491 / LMD-9).